The following is a 143-amino-acid chain: Small ribosomal subunit protein eS19x (143 aa).

The protein belongs to the eukaryotic ribosomal protein eS19 family.

This Arabidopsis thaliana (Mouse-ear cress) protein is Small ribosomal subunit protein eS19x (RPS19C).